The following is a 161-amino-acid chain: Large ribosomal subunit protein uL11 (161 aa).

It belongs to the universal ribosomal protein uL11 family. Part of the ribosomal stalk of the 50S ribosomal subunit. Interacts with L10 and the large rRNA to form the base of the stalk. L10 forms an elongated spine to which L12 dimers bind in a sequential fashion forming a multimeric L10(L12)X complex.

Functionally, forms part of the ribosomal stalk which helps the ribosome interact with GTP-bound translation factors. The sequence is that of Large ribosomal subunit protein uL11 from Methanosarcina barkeri (strain Fusaro / DSM 804).